Consider the following 349-residue polypeptide: N-acetyltaurine hydrolase (349 aa).

6 residues coordinate a divalent metal cation: H26, H28, E169, H201, H230, and D298.

It belongs to the metallo-dependent hydrolases superfamily. Phosphotriesterase family. The cofactor is a divalent metal cation.

The protein localises to the cytoplasm. The protein resides in the cytosol. It carries out the reaction N-acetyltaurine + H2O = taurine + acetate. The enzyme catalyses N-propanoyltaurine + H2O = propanoate + taurine. It catalyses the reaction N-acetyl-L-methionine + H2O = L-methionine + acetate. The catalysed reaction is N-acetyl-L-isoleucine + H2O = L-isoleucine + acetate. It carries out the reaction N-acetyl-L-leucine + H2O = L-leucine + acetate. The enzyme catalyses N-acetyl-L-valine + H2O = L-valine + acetate. Its function is as follows. N-acetyltaurine hydrolase that catalyzes the hydrolysis of N-acetyltaurine into taurine and acetate. PTER also acts on other N-acetyl amino acids (Met, Ile, Leu, Val) and N-propionyltaurine, but at lower rates. The chain is N-acetyltaurine hydrolase (pter) from Salmo salar (Atlantic salmon).